A 971-amino-acid polypeptide reads, in one-letter code: Nuclear factor NF-kappa-B p105 subunit (971 aa).

Residues 40 to 365 (PYLQILEQPK…EVQRKRQKLM (326 aa)) enclose the RHD domain. The residue at position 59 (Cys-59) is an S-nitrosocysteine; alternate. Cys-59 carries the S-(15-deoxy-Delta12,14-prostaglandin J2-9-yl)cysteine; alternate lipid modification. A Glycyl lysine isopeptide (Lys-Gly) (interchain with G-Cter in SUMO2) cross-link involves residue Lys-323. Ser-335 carries the phosphoserine; by PKA modification. The Nuclear localization signal signature appears at 358 to 363 (QRKRQK). The interval 370 to 392 (DSFGGGSGAGAGGGGMFGSGGGG) is GRR. The tract at residues 433–971 (INTKFKNGPK…GQEGPIEGKI (539 aa)) is interaction with CFLAR. Position 438 is an N6-acetyllysine; by EP300 (Lys-438). The disordered stretch occupies residues 439–470 (NGPKDCAKSDDEESLTLPEKETEGEGPSLPMA). Ser-447 is subject to Phosphoserine. ANK repeat units lie at residues 538–567 (NGDS…GLIS), 577–606 (LYQT…DLSL), 610–639 (WGNS…AAPL), 646–675 (EGLN…EVNA), 680–710 (SGRT…HVDS), and 714–743 (DGTT…DPLV). Residues 646 to 680 (EGLNAIHIAVMSNSLPCLLLLVAAGAEVNAQEQKS) form an essential for interaction with HIF1AN region. A (3S)-3-hydroxyasparagine; by HIF1AN modification is found at Asn-674. Ser-755 carries the post-translational modification Phosphoserine. The ANK 7 repeat unit spans residues 767–797 (PGTTPLDMAANWQVFDILNGKPYEPVFTSDD). A Death domain is found at 801 to 888 (QGDMKQLTED…EAIEVIQAAF (88 aa)). Ser-896 bears the Phosphoserine mark. Ser-910 carries the phosphoserine; by GSK3-beta; in vitro modification. A Phosphoserine modification is found at Ser-926. Phosphoserine; by IKKB occurs at positions 930 and 935. A Phosphoserine modification is found at Ser-940. Thr-946 bears the Phosphothreonine mark.

As to quaternary structure, component of the NF-kappa-B p65-p50 complex. Homodimer; component of the NF-kappa-B p50-p50 complex. Component of the NF-kappa-B p105-p50 complex. Component of the NF-kappa-B p50-c-Rel complex. Component of a complex consisting of the NF-kappa-B p50-p50 homodimer and BCL3. Also interacts with MAP3K8. NF-kappa-B p50 subunit interacts with NCOA3 coactivator, which may coactivate NF-kappa-B dependent expression via its histone acetyltransferase activity. Interacts with TSC22D3; this interaction prevents nuclear translocation and DNA-binding. Interacts with SPAG9 and UNC5CL. NFKB1/p105 interacts with CFLAR; the interaction inhibits p105 processing into p50. NFKB1/p105 forms a ternary complex with MAP3K8 and TNIP2. Interacts with GSK3B; the interaction prevents processing of p105 to p50. NFKB1/p50 interacts with NFKBIE. NFKB1/p50 interacts with NFKBIZ. Nuclear factor NF-kappa-B p50 subunit interacts with NFKBID. Directly interacts with MEN1. Interacts with HIF1AN. Interacts with FEM1AA; interaction is direct. In terms of processing, generation of the NF-kappa-B p50 (Nuclear factor NF-kappa-B p50 subunit) transcription factor takes place both cotranslationally and post-translationally via non-mutually exclusive mechanisms. A cotranslational processing allows the production of both p50 and p105 (Nuclear factor NF-kappa-B p105 subunit) from a single NFKB1 mRNA. While translation occurs, the particular unfolded structure after the GRR repeat region acts as a substrate for the proteasome, promoting degradation of the C-terminus. The GRR acts as a proteasomal 'stop signal', protecting the region upstream of the GRR from degradation and promoting generation of p50. It is unclear if limited proteasome degradation during cotranslational processing depends on ubiquitination. NF-kappa-B p50 is also generated post-translationally following ubiquitination by the KPC complex, leading to limited processing by the proteasome downstream of the GRR region, thereby generating p50. Post-translationally, phosphorylation at the C-terminus by IKBKB/IKKB acts as a signal for ubiquitination and promotes either complete degradation or processing to generate the NF-kappa-B p50 (Nuclear factor NF-kappa-B p50 subunit). Phosphorylation at Ser-910 primes p105 for proteolytic processing in response to TNF-alpha stimulation. Phosphorylation at Ser-926, Ser-930 and Ser-935 are required for BTRC/BTRCP-mediated ubiquitination and proteolysis. Phosphorylation at Ser-930 is also required for ubiquitination by the KPC complex and limited processing to generate NF-kappa-B p50 (Nuclear factor NF-kappa-B p50 subunit). Polyubiquitinated at multiple Lys residues in the C-terminus. Polyubiquitinated by the SCF(FBXW11) and SCF(BTRC) complexes following phosphorylation at Ser-926, Ser-930 and Ser-935, leading to its complete degradation. In contrast, polyubiquitination by the KPC complex following phosphorylation at Ser-930 leads to limited proteosomal processing and generation of the active NF-kappa-B p50 (Nuclear factor NF-kappa-B p50 subunit). In terms of processing, S-nitrosylation of Cys-59 affects DNA binding. Post-translationally, the covalent modification of cysteine by 15-deoxy-Delta12,14-prostaglandin-J2 is autocatalytic and reversible. It may occur as an alternative to other cysteine modifications, such as S-nitrosylation and S-palmitoylation.

The protein localises to the cytoplasm. It is found in the nucleus. Its function is as follows. NF-kappa-B is a pleiotropic transcription factor present in almost all cell types and is the endpoint of a series of signal transduction events that are initiated by a vast array of stimuli related to many biological processes such as inflammation, immunity, differentiation, cell growth, tumorigenesis and apoptosis. NF-kappa-B is a homo- or heterodimeric complex formed by the Rel-like domain-containing proteins RELA/p65, RELB, NFKB1/p105, NFKB1/p50, REL and NFKB2/p52 and the heterodimeric p65-p50 complex appears to be most abundant one. The dimers bind at kappa-B sites in the DNA of their target genes and the individual dimers have distinct preferences for different kappa-B sites that they can bind with distinguishable affinity and specificity. Different dimer combinations act as transcriptional activators or repressors, respectively. NF-kappa-B is controlled by various mechanisms of post-translational modification and subcellular compartmentalization as well as by interactions with other cofactors or corepressors. NF-kappa-B complexes are held in the cytoplasm in an inactive state complexed with members of the NF-kappa-B inhibitor (I-kappa-B) family. In a conventional activation pathway, I-kappa-B is phosphorylated by I-kappa-B kinases (IKKs) in response to different activators, subsequently degraded thus liberating the active NF-kappa-B complex which translocates to the nucleus. NF-kappa-B heterodimeric p65-p50 and RelB-p50 complexes are transcriptional activators. The NF-kappa-B p50-p50 homodimer is a transcriptional repressor, but can act as a transcriptional activator when associated with BCL3. NFKB1 appears to have dual functions such as cytoplasmic retention of attached NF-kappa-B proteins by p105 and generation of p50 by a cotranslational processing. The proteasome-mediated process ensures the production of both p50 and p105 and preserves their independent function, although processing of NFKB1/p105 also appears to occur post-translationally. p50 binds to the kappa-B consensus sequence 5'-GGRNNYYCC-3', located in the enhancer region of genes involved in immune response and acute phase reactions. Plays a role in the regulation of apoptosis. In a complex with MAP3K8, NFKB1/p105 represses MAP3K8-induced MAPK signaling; active MAP3K8 is released by proteasome-dependent degradation of NFKB1/p105. P105 is the precursor of the active p50 subunit (Nuclear factor NF-kappa-B p50 subunit) of the nuclear factor NF-kappa-B. Acts as a cytoplasmic retention of attached NF-kappa-B proteins by p105. In terms of biological role, constitutes the active form, which associates with RELA/p65 to form the NF-kappa-B p65-p50 complex to form a transcription factor. Together with RELA/p65, binds to the kappa-B consensus sequence 5'-GGRNNYYCC-3', located in the enhancer region of genes involved in immune response and acute phase reactions. Functionally, isoform 3 (p98) (but not p84 or p105) acts as a transactivator of NF-kappa-B-regulated gene expression. Its function is as follows. Acts as an inhibitor of transactivation of p50 NF-kappa-B subunit, probably by sequestering it in the cytoplasm. This chain is Nuclear factor NF-kappa-B p105 subunit (Nfkb1), found in Mus musculus (Mouse).